The primary structure comprises 417 residues: Actin-related protein 10 (417 aa).

Belongs to the actin family. In terms of assembly, subunit of dynactin, a multiprotein complex part of a tripartite complex with dynein and a adapter, such as BICDL1, BICD2 or HOOK3. The dynactin complex is built around ACTR1A/ACTB filament and consists of an actin-related filament composed of a shoulder domain, a pointed end and a barbed end. Its length is defined by its flexible shoulder domain. The soulder is composed of 2 DCTN1 subunits, 4 DCTN2 and 2 DCTN3. The 4 DCNT2 (via N-terminus) bind the ACTR1A filament and act as molecular rulers to determine the length. The pointed end is important for binding dynein-dynactin cargo adapters. Consists of 4 subunits: ACTR10, DCNT4, DCTN5 and DCTN6. The barbed end is composed of a CAPZA1:CAPZB heterodimers, which binds ACTR1A/ACTB filament and dynactin and stabilizes dynactin.

The protein localises to the cytoplasm. It is found in the cytoskeleton. In terms of biological role, part of the dynactin complex that activates the molecular motor dynein for ultra-processive transport along microtubules. In Sus scrofa (Pig), this protein is Actin-related protein 10 (ACTR10).